Here is a 303-residue protein sequence, read N- to C-terminus: Ornithine carbamoyltransferase (303 aa).

Residues 52-55, Gln79, Arg103, and 130-133 contribute to the carbamoyl phosphate site; these read STRT and HPCQ. Residues Asn161, Asp222, and 226 to 227 contribute to the L-ornithine site; that span reads SM. Residues 262 to 263 and Arg290 each bind carbamoyl phosphate; that span reads CL.

It belongs to the aspartate/ornithine carbamoyltransferase superfamily. OTCase family.

The protein resides in the cytoplasm. The enzyme catalyses carbamoyl phosphate + L-ornithine = L-citrulline + phosphate + H(+). Its pathway is amino-acid biosynthesis; L-arginine biosynthesis; L-arginine from L-ornithine and carbamoyl phosphate: step 1/3. Reversibly catalyzes the transfer of the carbamoyl group from carbamoyl phosphate (CP) to the N(epsilon) atom of ornithine (ORN) to produce L-citrulline. This Geobacter metallireducens (strain ATCC 53774 / DSM 7210 / GS-15) protein is Ornithine carbamoyltransferase.